The sequence spans 764 residues: MVTTHNLGFPRIGAQRELKFGLERYWKGESSRDALKALGAELRARHWNAQRDLDLAPIGDFSFYDQVLDMSFTLGNLPKRVQGFHGDVLDNYFRVARGRSAQVVDEHGACCGGVSAGEMTKWFDTNYHYIVPEFHADTNFSLDPSCLLQQLAEARALGVAGKPVILGPVTYLWLGKEKDDSDRLALLPKLLPVYGALLDTLTAQGVEWVQIDEPILVTELDAEWRQALRTAYAALETRRIKLLLATYFGTLGDNLTLAASLPVDGLHVDAINARDEVDALVRELPADRVLSVGAINGRNIWKTDLNATLDWLEPLAKQLGDRLWIAPSCSLLHVPVDLASEEKLDAEIRSWLAFALQKLDELKVLATALNQGRDKVADALAANAAAIDSRRRSPRVNNPAVKAALARIDAQLGNRASPYTQRAPKQSARLNLPAFPTTTIGSFPQTADIRHARSQFKAGALDEAGYRAAMQAEIERSVREQESLGLDVLVHGEAERNDMVEYFGEQLDGYAFSQFGWVQSYGSRCVKPPILFGDISRPKAMTVEWITYAQSLTNKPMKGMLTGPVTILNWSFVRDDQPRSVSCYQLALAIRDEVLDLEKAGVRVIQIDEAALREGLPLRRAQWGEYLKWAVEAFRITANGVQDDTQIHTHMCYSEFNDIIASIADMDADVITIETSRSDMELLDAFDSFRYPNEIGPGVYDIHSPNIPTQDHIVGLMKKAAERIPAERLWVNPDCGLKTRQWAEVIPALTNMVAAAKTLRNQVQ.

5-methyltetrahydropteroyltri-L-glutamate is bound by residues 16-19 (RELK) and lysine 121. L-homocysteine contacts are provided by residues 440–442 (IGS) and glutamate 493. Residues 440 to 442 (IGS) and glutamate 493 contribute to the L-methionine site. 5-methyltetrahydropteroyltri-L-glutamate is bound by residues 524–525 (RC) and tryptophan 570. Aspartate 608 is a binding site for L-homocysteine. An L-methionine-binding site is contributed by aspartate 608. Glutamate 614 contributes to the 5-methyltetrahydropteroyltri-L-glutamate binding site. Histidine 650, cysteine 652, and glutamate 674 together coordinate Zn(2+). Residue histidine 703 is the Proton donor of the active site. Residue cysteine 735 participates in Zn(2+) binding.

The protein belongs to the vitamin-B12 independent methionine synthase family. Zn(2+) serves as cofactor.

The enzyme catalyses 5-methyltetrahydropteroyltri-L-glutamate + L-homocysteine = tetrahydropteroyltri-L-glutamate + L-methionine. It participates in amino-acid biosynthesis; L-methionine biosynthesis via de novo pathway; L-methionine from L-homocysteine (MetE route): step 1/1. Its function is as follows. Catalyzes the transfer of a methyl group from 5-methyltetrahydrofolate to homocysteine resulting in methionine formation. The protein is 5-methyltetrahydropteroyltriglutamate--homocysteine methyltransferase of Burkholderia ambifaria (strain ATCC BAA-244 / DSM 16087 / CCUG 44356 / LMG 19182 / AMMD) (Burkholderia cepacia (strain AMMD)).